The chain runs to 279 residues: Probable endonuclease 4 (279 aa).

Zn(2+)-binding residues include His66, His106, Glu142, Asp175, His178, His212, Asp225, His227, and Glu257.

It belongs to the AP endonuclease 2 family. Requires Zn(2+) as cofactor.

It carries out the reaction Endonucleolytic cleavage to 5'-phosphooligonucleotide end-products.. Endonuclease IV plays a role in DNA repair. It cleaves phosphodiester bonds at apurinic or apyrimidinic (AP) sites, generating a 3'-hydroxyl group and a 5'-terminal sugar phosphate. The polypeptide is Probable endonuclease 4 (Moorella thermoacetica (strain ATCC 39073 / JCM 9320)).